The sequence spans 451 residues: DNA polymerase IV (451 aa).

In terms of domain architecture, UmuC spans 5–187; it reads VIHVDMDAFF…LPVGRLWGVG (183 aa). Positions 9 and 104 each coordinate Mg(2+). Residue E105 is part of the active site.

This sequence belongs to the DNA polymerase type-Y family. In terms of assembly, monomer. Requires Mg(2+) as cofactor.

Its subcellular location is the cytoplasm. It carries out the reaction DNA(n) + a 2'-deoxyribonucleoside 5'-triphosphate = DNA(n+1) + diphosphate. In terms of biological role, poorly processive, error-prone DNA polymerase involved in untargeted mutagenesis. Copies undamaged DNA at stalled replication forks, which arise in vivo from mismatched or misaligned primer ends. These misaligned primers can be extended by PolIV. Exhibits no 3'-5' exonuclease (proofreading) activity. May be involved in translesional synthesis, in conjunction with the beta clamp from PolIII. This Corynebacterium diphtheriae (strain ATCC 700971 / NCTC 13129 / Biotype gravis) protein is DNA polymerase IV.